We begin with the raw amino-acid sequence, 490 residues long: Cell division cycle protein cdt2 (490 aa).

Residues I18–K40 form a disordered region. WD repeat units lie at residues A178 to D208, Y226 to D257, G285 to D317, K339 to S369, R387 to V419, and G435 to N464.

The protein belongs to the WD repeat cdt2 family. As to quaternary structure, component of the DCX(DTL) E3 ubiquitin ligase complex, at least composed of cul4, ddb1, cdt2 and pip1.

The protein resides in the nucleus. It functions in the pathway protein modification; protein ubiquitination. Its function is as follows. Substrate-specific adapter of a DCX (DDB1-CUL4-X-box) E3 ubiquitin-protein ligase complex required for DNA replication during mitosis and meiosis. The DCX(DTL) complex, also named CRL4(CDT2) complex, mediates the polyubiquitination and subsequent degradation of cdt1 and spd1. Involved in the regulation of mitotic and pre-meiotic S-phase progression. The chain is Cell division cycle protein cdt2 (cdt2) from Schizosaccharomyces pombe (strain 972 / ATCC 24843) (Fission yeast).